A 335-amino-acid polypeptide reads, in one-letter code: LIM and SH3 domain protein F42H10.3 (335 aa).

An LIM zinc-binding domain is found at 5-65; the sequence is CAREDCGKTV…DPHYPKTVAS (61 aa). Nebulin repeat units lie at residues 66–97 and 98–132; these read VMADTPEMRRIAENTKNQSNIKYHAEYEKMKG and TKIEIADDPEMERLKKNTQVQSNVSYHGVLDQKAR. Residues 128–142 are compositionally biased toward basic and acidic residues; the sequence is DQKARQEEVRPKEEI. 2 disordered regions span residues 128-151 and 233-264; these read DQKARQEEVRPKEEISPNPTPTPI and DFAGAPPPSSNSISSTSPHSTLSSPQSTISPT. The span at 242-260 shows a compositional bias: low complexity; it reads SNSISSTSPHSTLSSPQST. In terms of domain architecture, SH3 spans 266–327; that stretch reads KAGFAVKAIY…PANYVQPHKL (62 aa).

The protein is LIM and SH3 domain protein F42H10.3 of Caenorhabditis elegans.